A 327-amino-acid chain; its full sequence is MLQLDEILANATTAIETAASLVALDEVRVQYLGKKGELTSQLQSLGKLPPEERRTAGQEINKAKGAVQQAIAARKDALQRAELETKLAAETIDVSLPGRRIENGGLHPVTRTVERIEQFFGELGFSTESGPEIEDAFHNFDALNIADDHPARTDHDTFFFNPDLMLRTHTSGVQIRTMEHGKPPFRFIAPGRVYRNDYDQTHTPMFHQVEGMLVDENVNFAQLKGILNEFLCNFFEEEVEVRFRPSFFPFTEPSAEVDVKRKDGKWLEVLGCGMVHPNVLRSVGIDPEKYSGFAFGMGVERLTMLRYGVNDLRSFFENDLRFLKQFK.

Mg(2+) is bound at residue Glu-252.

The protein belongs to the class-II aminoacyl-tRNA synthetase family. Phe-tRNA synthetase alpha subunit type 1 subfamily. As to quaternary structure, tetramer of two alpha and two beta subunits. Requires Mg(2+) as cofactor.

It is found in the cytoplasm. It carries out the reaction tRNA(Phe) + L-phenylalanine + ATP = L-phenylalanyl-tRNA(Phe) + AMP + diphosphate + H(+). This is Phenylalanine--tRNA ligase alpha subunit from Photobacterium profundum (strain SS9).